We begin with the raw amino-acid sequence, 229 residues long: Coiled-coil domain-containing protein 134 (229 aa).

A signal peptide spans Met1–Gly22. The N-linked (GlcNAc...) asparagine glycan is linked to Asn148. Positions Pro191–Leu229 are disordered. Positions Phe196 to Lys218 form a coiled coil. The short motif at Gln226–Leu229 is the Prevents secretion from ER element.

The protein belongs to the CCDC134 family. In terms of assembly, interacts with TADA2A. Associates with the PCAF complex via TADA2A binding. In terms of processing, O-glycosylated, with additional sialic acid modifications.

It is found in the endoplasmic reticulum lumen. The protein resides in the secreted. It localises to the cytoplasm. The protein localises to the nucleus. Molecular adapter required to prevent protein hyperglycosylation of HSP90B1: during translation, associates with nascent HSP90B1 and the STT3A catalytic component of the OST-A complex and tethers them to a specialized translocon that forms a microenvironment for HSP90B1 folding. In the CCDC134-containing translocon, STT3A associates with the SRT pseudosubstrate motif of HSP90B1, preventing access to facultative glycosylation sites until folding is completed, preventing hyperglycosylation and subsequent degradation of HSP90B1. In extracellular secreted form, promotes proliferation and activation of CD8(+) T-cells, suggesting a cytokine-like function. May inhibit ERK and JNK signaling activity. May suppress cell migration and invasion activity, via its effects on ERK and JNK signaling. May also localize in the nucleus: enhances stability of the PCAF histone acetyltransferase (HAT) complex member TADA2A and thus promotes PCAF-mediated histone acetyltransferase activity. Has a critical role in the regulation of osteogenesis and bone development. The polypeptide is Coiled-coil domain-containing protein 134 (Ccdc134) (Rattus norvegicus (Rat)).